Consider the following 478-residue polypeptide: Ankyrin repeat and BTB/POZ domain-containing protein 1 (478 aa).

ANK repeat units lie at residues 1–31 and 35–64; these read MDTS…EVNV and WDST…RCEA. BTB domains lie at 115 to 182 and 272 to 346; these read SDVV…DIGV and PDIC…ELPP. A coiled-coil region spans residues 450-478; it reads TVQTYSAIEEAQQQLRALENLLVSIGLDC.

The protein resides in the cytoplasm. Functionally, may act as a mediator of the PTEN growth-suppressive signaling pathway. May play a role in developmental processes. The polypeptide is Ankyrin repeat and BTB/POZ domain-containing protein 1 (Rattus norvegicus (Rat)).